Consider the following 344-residue polypeptide: Glycerol-3-phosphate dehydrogenase [NAD(P)+] (344 aa).

The NADPH site is built by S11, W12, H32, R33, and K106. Sn-glycerol 3-phosphate is bound by residues K106, G136, and S138. A140 provides a ligand contact to NADPH. 5 residues coordinate sn-glycerol 3-phosphate: K192, D245, S255, R256, and N257. The active-site Proton acceptor is the K192. R256 provides a ligand contact to NADPH. NADPH contacts are provided by V280 and E282.

Belongs to the NAD-dependent glycerol-3-phosphate dehydrogenase family.

It is found in the cytoplasm. It catalyses the reaction sn-glycerol 3-phosphate + NAD(+) = dihydroxyacetone phosphate + NADH + H(+). The enzyme catalyses sn-glycerol 3-phosphate + NADP(+) = dihydroxyacetone phosphate + NADPH + H(+). The protein operates within membrane lipid metabolism; glycerophospholipid metabolism. Functionally, catalyzes the reduction of the glycolytic intermediate dihydroxyacetone phosphate (DHAP) to sn-glycerol 3-phosphate (G3P), the key precursor for phospholipid synthesis. The sequence is that of Glycerol-3-phosphate dehydrogenase [NAD(P)+] from Geobacillus kaustophilus (strain HTA426).